The chain runs to 315 residues: Putative 2-hydroxyacid dehydrogenase HI_1556 (315 aa).

NAD(+) is bound by residues threonine 73, 156-157, 231-233, and aspartate 257; these read CL and TGR. Arginine 233 is an active-site residue. The active site involves glutamate 262. The active-site Proton donor is histidine 285. 285–288 is an NAD(+) binding site; the sequence is HIAW.

Belongs to the D-isomer specific 2-hydroxyacid dehydrogenase family.

In Haemophilus influenzae (strain ATCC 51907 / DSM 11121 / KW20 / Rd), this protein is Putative 2-hydroxyacid dehydrogenase HI_1556.